Reading from the N-terminus, the 262-residue chain is 3-methyl-2-oxobutanoate hydroxymethyltransferase (262 aa).

Residues D44 and D83 each contribute to the Mg(2+) site. 3-methyl-2-oxobutanoate is bound by residues 44–45 (DS), D83, and K112. E114 is a Mg(2+) binding site. E177 acts as the Proton acceptor in catalysis.

Belongs to the PanB family. Homodecamer; pentamer of dimers. Requires Mg(2+) as cofactor.

It is found in the cytoplasm. The catalysed reaction is 3-methyl-2-oxobutanoate + (6R)-5,10-methylene-5,6,7,8-tetrahydrofolate + H2O = 2-dehydropantoate + (6S)-5,6,7,8-tetrahydrofolate. The protein operates within cofactor biosynthesis; coenzyme A biosynthesis. Catalyzes the reversible reaction in which hydroxymethyl group from 5,10-methylenetetrahydrofolate is transferred onto alpha-ketoisovalerate to form ketopantoate. This chain is 3-methyl-2-oxobutanoate hydroxymethyltransferase, found in Metallosphaera sedula (strain ATCC 51363 / DSM 5348 / JCM 9185 / NBRC 15509 / TH2).